Here is a 547-residue protein sequence, read N- to C-terminus: Delta-guaiene synthase 3 (547 aa).

Positions 299, 303, and 444 each coordinate Mg(2+). The DDXXD motif signature appears at 299 to 303 (DDTYD).

It belongs to the terpene synthase family. It depends on Mg(2+) as a cofactor.

It catalyses the reaction (2E,6E)-farnesyl diphosphate = delta-guaiene + diphosphate. The enzyme catalyses (2E,6E)-farnesyl diphosphate = alpha-guaiene + diphosphate. The protein operates within secondary metabolite biosynthesis; terpenoid biosynthesis. Functionally, sesquiterpene synthase involved in the biosynthesis of delta-guaiene (78.2%) and alpha-guaiene (20.9%), two structures composed of five- and seven-membered rings. Also produces 0.9% of alpha-humulene. The sequence is that of Delta-guaiene synthase 3 (C4) from Aquilaria crassna (Eagle wood).